The following is a 138-amino-acid chain: Histone H2B.8 (138 aa).

The segment covering 1–38 (MAPKAAEKKPAGKKPAEKAPAEKLPKAEKKITKEGGSE) has biased composition (basic and acidic residues). A disordered region spans residues 1-45 (MAPKAAEKKPAGKKPAEKAPAEKLPKAEKKITKEGGSEKKKKKSK). Alanine 2 carries the n,N,N-trimethylalanine; alternate modification. The residue at position 2 (alanine 2) is a N,N-dimethylalanine; alternate. N-methylalanine; alternate is present on alanine 2. Position 4 is an N6-methyllysine (lysine 4). Residues lysine 8 and lysine 13 each carry the N6-acetyllysine modification. Position 14 is an N6,N6-dimethyllysine (lysine 14). 4 positions are modified to N6-acetyllysine: lysine 18, lysine 23, lysine 29, and lysine 30. Lysine 134 participates in a covalent cross-link: Glycyl lysine isopeptide (Lys-Gly) (interchain with G-Cter in ubiquitin).

Belongs to the histone H2B family. The nucleosome is a histone octamer containing two molecules each of H2A, H2B, H3 and H4 assembled in one H3-H4 heterotetramer and two H2A-H2B heterodimers. The octamer wraps approximately 147 bp of DNA. Post-translationally, can be acetylated to form H2BK6ac, H2BK33ac and H2BK34ac. In terms of processing, monoubiquitinated by BRE1 to form H2BK143ub1 and deubiquitinated by UBP26. Required for heterochromatic histone H3 di- and trimethylation at H3K4me. May give a specific tag for epigenetic transcriptional activation.

The protein localises to the nucleus. It is found in the chromosome. In terms of biological role, core component of nucleosome. Nucleosomes wrap and compact DNA into chromatin, limiting DNA accessibility to the cellular machineries which require DNA as a template. Histones thereby play a central role in transcription regulation, DNA repair, DNA replication and chromosomal stability. DNA accessibility is regulated via a complex set of post-translational modifications of histones, also called histone code, and nucleosome remodeling. In Arabidopsis thaliana (Mouse-ear cress), this protein is Histone H2B.8.